The following is a 323-amino-acid chain: Non-structural protein 9 (323 aa).

Residues 1–142 (MFTSSAAKTG…GGSRPSQERG (142 aa)) are disordered. Over residues 33–49 (IDGSISSGPISTGPDSD) the composition is skewed to low complexity. The segment covering 99–115 (PNHTDIGTSLGQVTTKG) has biased composition (polar residues).

Its subcellular location is the host cytoplasm. In terms of biological role, constituent of viral factories. This Rice gall dwarf virus (RGDV) protein is Non-structural protein 9.